The following is a 265-amino-acid chain: MPVVSLAELLESGVHFGHQTRRWNPKMSQYIYTARNGVHIIDLVQTAQLIEEAYEFVRGEADRGKRFLFIGTKRQAAAIIKQEALRSGSHFVNQRWLGGMLTNWETIRGRVERLKELEELENSGALDKRPKKEASVLRRELGKLEKYLGGIKTMRRLPDLVVVVDQRREYNAIQECQKLGIPIISLLDTNCDPDLVDVPIPANDDAIRSVKLILGKISDAIIEGRRGGQAAVEEYEEDYDNETEYEEEGDYSQYAAEFASGDDDN.

Belongs to the universal ribosomal protein uS2 family.

This is Small ribosomal subunit protein uS2 from Microcystis aeruginosa (strain NIES-843 / IAM M-2473).